The chain runs to 23 residues: Protein YsaE (23 aa).

This chain is Protein YsaE, found in Escherichia coli (strain K12).